The primary structure comprises 122 residues: uncharacterized protein (122 aa).

The Cytoplasmic segment spans residues 1–24; that stretch reads MKNRKFSNLLLLRLRILCFNKKPA. A helical transmembrane segment spans residues 25-45; that stretch reads FAATSYAFFFRNFSVLIFIMV. Over 46–57 the chain is Extracellular; it reads PDEKENGAAADN. A helical transmembrane segment spans residues 58 to 78; sequence SFSLLIGRGVVLFLFYCPTAL. Residues 79–122 lie on the Cytoplasmic side of the membrane; it reads KMHGPVPAHWFCDKNIEAIQSDGQIRLLRSGPFPWSHGTCIRGA.

The protein localises to the membrane. This is an uncharacterized protein from Saccharomyces cerevisiae (strain ATCC 204508 / S288c) (Baker's yeast).